The chain runs to 344 residues: Putative NAD(P)H nitroreductase MT3217 (344 aa).

Residues 40–44 (QPWRW) and arginine 326 each bind FMN.

Belongs to the nitroreductase family. As to quaternary structure, interacts with human TLR2. Requires FMN as cofactor.

In terms of biological role, stimulates pro-inflammatory cytokine expression via TLR2 signaling pathway. Activation of TLR2 results in the phosphorylation and activation of NF-kappa-B. Also induces TLR2 expression. May influence the innate immune responses to facilitate the survival of M.tuberculosis in the granulomatous microenvironment. This is Putative NAD(P)H nitroreductase MT3217 from Mycobacterium tuberculosis (strain CDC 1551 / Oshkosh).